Here is a 206-residue protein sequence, read N- to C-terminus: Ribosomal RNA small subunit methyltransferase G (206 aa).

S-adenosyl-L-methionine contacts are provided by residues Gly-74, Leu-79, 125 to 126, and Arg-140; that span reads VE.

It belongs to the methyltransferase superfamily. RNA methyltransferase RsmG family.

The protein localises to the cytoplasm. The catalysed reaction is guanosine(527) in 16S rRNA + S-adenosyl-L-methionine = N(7)-methylguanosine(527) in 16S rRNA + S-adenosyl-L-homocysteine. Specifically methylates the N7 position of guanine in position 527 of 16S rRNA. In Shewanella frigidimarina (strain NCIMB 400), this protein is Ribosomal RNA small subunit methyltransferase G.